Reading from the N-terminus, the 249-residue chain is 2,3-bisphosphoglycerate-dependent phosphoglycerate mutase (249 aa).

Substrate is bound by residues 8–15 (RHGESIWN), 21–22 (TG), Arg60, 87–90 (ERHY), Lys98, 114–115 (RR), and 183–184 (GN). The active-site Tele-phosphohistidine intermediate is the His9. Catalysis depends on Glu87, which acts as the Proton donor/acceptor.

It belongs to the phosphoglycerate mutase family. BPG-dependent PGAM subfamily.

The catalysed reaction is (2R)-2-phosphoglycerate = (2R)-3-phosphoglycerate. It functions in the pathway carbohydrate degradation; glycolysis; pyruvate from D-glyceraldehyde 3-phosphate: step 3/5. Catalyzes the interconversion of 2-phosphoglycerate and 3-phosphoglycerate. This Caldanaerobacter subterraneus subsp. tengcongensis (strain DSM 15242 / JCM 11007 / NBRC 100824 / MB4) (Thermoanaerobacter tengcongensis) protein is 2,3-bisphosphoglycerate-dependent phosphoglycerate mutase.